Consider the following 219-residue polypeptide: Polysialic acid transport ATP-binding protein KpsT (219 aa).

An ABC transporter domain is found at Ile2–Asp218. Gly38–Ser45 contributes to the ATP binding site.

Belongs to the ABC transporter superfamily.

It localises to the cell inner membrane. Its function is as follows. Putative ATP-binding protein, and an energy coupling component for the transport of polysialic acid across the cytoplasmic membrane. This is Polysialic acid transport ATP-binding protein KpsT (kpsT) from Escherichia coli.